The following is a 302-amino-acid chain: tRNA pseudouridine synthase B (302 aa).

The active-site Nucleophile is the aspartate 43.

It belongs to the pseudouridine synthase TruB family. Type 1 subfamily.

The enzyme catalyses uridine(55) in tRNA = pseudouridine(55) in tRNA. Responsible for synthesis of pseudouridine from uracil-55 in the psi GC loop of transfer RNAs. The polypeptide is tRNA pseudouridine synthase B (Burkholderia mallei (strain NCTC 10247)).